A 246-amino-acid chain; its full sequence is MRRLKIIISYDGTHFSGYQVQPGERTVQAEIERVLAIMHKEEKVKVTASGRTDARVHATGQTLHFDTPLAIPTDKYRKALNVQLPRDIRVLSVEEVAHDFHARYSVTGKRYRYIWSCEPIQNPFRRHYTVDTNGVKPDVVAMQKAAQAIIGTHDFSCFCAANTSVQDKVRTVTSLQFEWHGEELHMVIEGNGFLYNMVRIIAGTLWEVGIDRRTIENIALVVASEDRDKAGKTAPPQGLYLEKVFY.

The Nucleophile role is filled by D53. Residue Y111 coordinates substrate.

It belongs to the tRNA pseudouridine synthase TruA family. As to quaternary structure, homodimer.

The catalysed reaction is uridine(38/39/40) in tRNA = pseudouridine(38/39/40) in tRNA. Its function is as follows. Formation of pseudouridine at positions 38, 39 and 40 in the anticodon stem and loop of transfer RNAs. The protein is tRNA pseudouridine synthase A of Lysinibacillus sphaericus (strain C3-41).